Here is a 414-residue protein sequence, read N- to C-terminus: Serine--tRNA ligase (414 aa).

An L-serine-binding site is contributed by 230–232 (TAE). 261–263 (RKE) serves as a coordination point for ATP. E284 contributes to the L-serine binding site. 348–351 (EISS) is a binding site for ATP. S382 provides a ligand contact to L-serine.

This sequence belongs to the class-II aminoacyl-tRNA synthetase family. Type-1 seryl-tRNA synthetase subfamily. As to quaternary structure, homodimer. The tRNA molecule binds across the dimer.

Its subcellular location is the cytoplasm. It catalyses the reaction tRNA(Ser) + L-serine + ATP = L-seryl-tRNA(Ser) + AMP + diphosphate + H(+). The catalysed reaction is tRNA(Sec) + L-serine + ATP = L-seryl-tRNA(Sec) + AMP + diphosphate + H(+). The protein operates within aminoacyl-tRNA biosynthesis; selenocysteinyl-tRNA(Sec) biosynthesis; L-seryl-tRNA(Sec) from L-serine and tRNA(Sec): step 1/1. Its function is as follows. Catalyzes the attachment of serine to tRNA(Ser). Is also able to aminoacylate tRNA(Sec) with serine, to form the misacylated tRNA L-seryl-tRNA(Sec), which will be further converted into selenocysteinyl-tRNA(Sec). This is Serine--tRNA ligase from Sulfurovum sp. (strain NBC37-1).